Here is a 225-residue protein sequence, read N- to C-terminus: Glutathione S-transferase Mu 3 (225 aa).

The GST N-terminal domain occupies 5-92; it reads SSMVLGYWDI…YIARKHNMCG (88 aa). Residues 11 to 12, 50 to 54, and 63 to 64 contribute to the glutathione site; these read YW, WLDVK, and NL. A Glycyl lysine isopeptide (Lys-Gly) (interchain with G-Cter in SUMO2) cross-link involves residue Lys54. Residue Lys73 forms a Glycyl lysine isopeptide (Lys-Gly) (interchain with G-Cter in SUMO2) linkage. A glutathione-binding site is contributed by 76–77; it reads QS. In terms of domain architecture, GST C-terminal spans 94–212; sequence TEEEKIRVDI…QSDQFCKMPI (119 aa). Tyr120 contributes to the substrate binding site.

This sequence belongs to the GST superfamily. Mu family. Homodimer. The N-terminus is blocked. As to expression, testis and brain.

The protein localises to the cytoplasm. It carries out the reaction RX + glutathione = an S-substituted glutathione + a halide anion + H(+). Its function is as follows. Conjugation of reduced glutathione to a wide number of exogenous and endogenous hydrophobic electrophiles. May govern uptake and detoxification of both endogenous compounds and xenobiotics at the testis and brain blood barriers. This chain is Glutathione S-transferase Mu 3 (GSTM3), found in Homo sapiens (Human).